We begin with the raw amino-acid sequence, 42 residues long: Large ribosomal subunit protein bL36 (42 aa).

It belongs to the bacterial ribosomal protein bL36 family.

The polypeptide is Large ribosomal subunit protein bL36 (Ehrlichia canis (strain Jake)).